The following is a 123-amino-acid chain: Small ribosomal subunit protein uS12 (123 aa).

The segment at 1-30 (MPTIQQLVRKGRQDKVEKNKTPALEGSPQR) is disordered. Over residues 11–20 (GRQDKVEKNK) the composition is skewed to basic and acidic residues. D89 is subject to 3-methylthioaspartic acid.

It belongs to the universal ribosomal protein uS12 family. Part of the 30S ribosomal subunit. Contacts proteins S8 and S17. May interact with IF1 in the 30S initiation complex.

Its function is as follows. With S4 and S5 plays an important role in translational accuracy. Functionally, interacts with and stabilizes bases of the 16S rRNA that are involved in tRNA selection in the A site and with the mRNA backbone. Located at the interface of the 30S and 50S subunits, it traverses the body of the 30S subunit contacting proteins on the other side and probably holding the rRNA structure together. The combined cluster of proteins S8, S12 and S17 appears to hold together the shoulder and platform of the 30S subunit. In Streptomyces avermitilis (strain ATCC 31267 / DSM 46492 / JCM 5070 / NBRC 14893 / NCIMB 12804 / NRRL 8165 / MA-4680), this protein is Small ribosomal subunit protein uS12 (rpsL).